The sequence spans 203 residues: Small ribosomal subunit protein uS4 (203 aa).

Residues 93 to 154 enclose the S4 RNA-binding domain; it reads RRFDNVVYRC…KSRNLDAVAD (62 aa).

Belongs to the universal ribosomal protein uS4 family. As to quaternary structure, part of the 30S ribosomal subunit. Contacts protein S5. The interaction surface between S4 and S5 is involved in control of translational fidelity.

Its function is as follows. One of the primary rRNA binding proteins, it binds directly to 16S rRNA where it nucleates assembly of the body of the 30S subunit. In terms of biological role, with S5 and S12 plays an important role in translational accuracy. The protein is Small ribosomal subunit protein uS4 of Chlorobaculum parvum (strain DSM 263 / NCIMB 8327) (Chlorobium vibrioforme subsp. thiosulfatophilum).